Here is a 141-residue protein sequence, read N- to C-terminus: Keratin-associated protein 19-2 (141 aa).

The segment at 5–135 (SGYSGGLGYG…CRRSSCCGGY (131 aa)) is 48 X 2 AA repeats of G-[YCGS].

It belongs to the KRTAP type 19 family. In terms of assembly, interacts with hair keratins. As to expression, strong expression in narrowly defined pattern restricted to the lower and middle cortical regions of the hair shaft in both developing and cycling hair. During hair follicle regression (catagen), expression levels decrease until expression is no longer detectable in follicles at resting stage (telogen).

Functionally, in the hair cortex, hair keratin intermediate filaments are embedded in an interfilamentous matrix, consisting of hair keratin-associated proteins (KRTAP), which are essential for the formation of a rigid and resistant hair shaft through their extensive disulfide bond cross-linking with abundant cysteine residues of hair keratins. The matrix proteins include the high-sulfur and high-glycine-tyrosine keratins. The sequence is that of Keratin-associated protein 19-2 (Krtap19-2) from Mus musculus (Mouse).